We begin with the raw amino-acid sequence, 907 residues long: Protein translocase subunit SecA (907 aa).

Residues Gln87, 105 to 109 (GEGKT), and Asp511 contribute to the ATP site. Zn(2+) is bound by residues Cys891, Cys893, Cys902, and His903.

The protein belongs to the SecA family. In terms of assembly, monomer and homodimer. Part of the essential Sec protein translocation apparatus which comprises SecA, SecYEG and auxiliary proteins SecDF-YajC and YidC. It depends on Zn(2+) as a cofactor.

The protein resides in the cell inner membrane. Its subcellular location is the cytoplasm. It carries out the reaction ATP + H2O + cellular proteinSide 1 = ADP + phosphate + cellular proteinSide 2.. In terms of biological role, part of the Sec protein translocase complex. Interacts with the SecYEG preprotein conducting channel. Has a central role in coupling the hydrolysis of ATP to the transfer of proteins into and across the cell membrane, serving both as a receptor for the preprotein-SecB complex and as an ATP-driven molecular motor driving the stepwise translocation of polypeptide chains across the membrane. The sequence is that of Protein translocase subunit SecA from Aromatoleum aromaticum (strain DSM 19018 / LMG 30748 / EbN1) (Azoarcus sp. (strain EbN1)).